A 423-amino-acid polypeptide reads, in one-letter code: UPF0229 protein PSPPH_0628 (423 aa).

Residues 65-110 (HHGRGGKQTVVHPGNKEFTTGEHIARPQGGGGGKGPGKAGNSGEGM) are disordered. A compositionally biased stretch (gly residues) spans 92-107 (QGGGGGKGPGKAGNSG).

It belongs to the UPF0229 family.

The protein is UPF0229 protein PSPPH_0628 of Pseudomonas savastanoi pv. phaseolicola (strain 1448A / Race 6) (Pseudomonas syringae pv. phaseolicola (strain 1448A / Race 6)).